Consider the following 146-residue polypeptide: Keratin-associated protein 4-1 (146 aa).

18 consecutive repeat copies span residues 5-9 (CCGSV), 24-28 (CCRPS), 29-33 (CCQTT), 34-38 (CCCPS), 44-48 (CCRPS), 54-58 (CCQTT), 59-63 (CCRPS), 64-68 (CCHPV), 69-73 (CCQTT), 83-87 (CCRPL), 88-92 (CCQTT), 102-106 (CCRPL), 107-111 (CCQTT), 121-125 (CCRPL), 126-130 (CCQTT), 131-135 (CCRAT), 136-140 (CCRPS), and 141-145 (CCGSS). Positions 5–145 (CCGSVCSDQG…CCRPSCCGSS (141 aa)) are 18 X 5 AA repeats of C-C-[GRQC]-[SPT]-[VSTL].

It belongs to the KRTAP type 4 family. In terms of assembly, interacts with hair keratins. As to expression, expressed in the hair follicles.

In terms of biological role, in the hair cortex, hair keratin intermediate filaments are embedded in an interfilamentous matrix, consisting of hair keratin-associated proteins (KRTAP), which are essential for the formation of a rigid and resistant hair shaft through their extensive disulfide bond cross-linking with abundant cysteine residues of hair keratins. The matrix proteins include the high-sulfur and high-glycine-tyrosine keratins. The sequence is that of Keratin-associated protein 4-1 (KRTAP4-1) from Homo sapiens (Human).